We begin with the raw amino-acid sequence, 879 residues long: Valine--tRNA ligase (879 aa).

The 'HIGH' region motif lies at 45 to 55; the sequence is PNVTGKLHLGH. A 'KMSKS' region motif is present at residues 521–525; sequence KMSKS. Residue lysine 524 coordinates ATP. A coiled-coil region spans residues 806–879; the sequence is LTELVNVDEE…ERMKELKESK (74 aa).

The protein belongs to the class-I aminoacyl-tRNA synthetase family. ValS type 1 subfamily. In terms of assembly, monomer.

Its subcellular location is the cytoplasm. It carries out the reaction tRNA(Val) + L-valine + ATP = L-valyl-tRNA(Val) + AMP + diphosphate. Its function is as follows. Catalyzes the attachment of valine to tRNA(Val). As ValRS can inadvertently accommodate and process structurally similar amino acids such as threonine, to avoid such errors, it has a 'posttransfer' editing activity that hydrolyzes mischarged Thr-tRNA(Val) in a tRNA-dependent manner. The protein is Valine--tRNA ligase of Lactobacillus johnsonii (strain CNCM I-12250 / La1 / NCC 533).